Consider the following 385-residue polypeptide: Chaperone protein DnaJ (385 aa).

Residues 5–70 form the J domain; sequence DFYEVLGVSR…QKKAAYDQYG (66 aa). The segment at 137–214 adopts a CR-type zinc-finger fold; the sequence is GVSKEIEVPT…CHGQGRKQKT (78 aa). Residues C150, C153, C167, C170, C189, C192, C202, and C205 each contribute to the Zn(2+) site. CXXCXGXG motif repeat units follow at residues 150-157, 167-174, 189-196, and 202-209; these read CDTCDGSG, CGTCHGHG, CPTCHGKG, and CNECHGQG.

The protein belongs to the DnaJ family. As to quaternary structure, homodimer. Requires Zn(2+) as cofactor.

Its subcellular location is the cytoplasm. In terms of biological role, participates actively in the response to hyperosmotic and heat shock by preventing the aggregation of stress-denatured proteins and by disaggregating proteins, also in an autonomous, DnaK-independent fashion. Unfolded proteins bind initially to DnaJ; upon interaction with the DnaJ-bound protein, DnaK hydrolyzes its bound ATP, resulting in the formation of a stable complex. GrpE releases ADP from DnaK; ATP binding to DnaK triggers the release of the substrate protein, thus completing the reaction cycle. Several rounds of ATP-dependent interactions between DnaJ, DnaK and GrpE are required for fully efficient folding. Also involved, together with DnaK and GrpE, in the DNA replication of plasmids through activation of initiation proteins. This Vibrio harveyi (Beneckea harveyi) protein is Chaperone protein DnaJ.